A 314-amino-acid chain; its full sequence is Nodulation protein D 1 (314 aa).

The 58-residue stretch at 6–63 (LDLNLLVALDAVMTARNLTAAARKINLSQPAMSAAIARLRTYFRDELFTMRGRELVPT) folds into the HTH lysR-type domain. The H-T-H motif DNA-binding region spans 23–42 (LTAAARKINLSQPAMSAAIA).

This sequence belongs to the LysR transcriptional regulatory family.

Functionally, nodD regulates the expression of the nodABCFE genes which encode other nodulation proteins. NodD is also a negative regulator of its own expression. Binds flavonoids as inducers. This is Nodulation protein D 1 (nodD1) from Bradyrhizobium diazoefficiens (strain JCM 10833 / BCRC 13528 / IAM 13628 / NBRC 14792 / USDA 110).